The sequence spans 271 residues: Nodulin-26 (271 aa).

The next 2 helical transmembrane spans lie at L40–E62 and G72–G94. The NPA 1 signature appears at N97–A99. A run of 3 helical transmembrane segments spans residues V115 to F137, T152 to V174, and V181 to V203. The short motif at N209 to A211 is the NPA 2 element. The helical transmembrane segment at G225–V247 threads the bilayer. A Phosphoserine; by CPK modification is found at S262.

It belongs to the MIP/aquaporin (TC 1.A.8) family. NIP (TC 1.A.8.12) subfamily.

It is found in the symbiosome. Its subcellular location is the peribacteroid membrane. Aquaporins facilitate the transport of water and small neutral solutes across cell membranes. This aquaporin may function in transporting small molecules across the peribacteroid membranes. The sequence is that of Nodulin-26 from Glycine max (Soybean).